We begin with the raw amino-acid sequence, 200 residues long: Probable molybdenum cofactor guanylyltransferase (200 aa).

GTP contacts are provided by residues 9–11, K21, D69, and D100; that span reads LAG. D100 lines the Mg(2+) pocket.

The protein belongs to the MobA family. It depends on Mg(2+) as a cofactor.

Its subcellular location is the cytoplasm. It carries out the reaction Mo-molybdopterin + GTP + H(+) = Mo-molybdopterin guanine dinucleotide + diphosphate. In terms of biological role, transfers a GMP moiety from GTP to Mo-molybdopterin (Mo-MPT) cofactor (Moco or molybdenum cofactor) to form Mo-molybdopterin guanine dinucleotide (Mo-MGD) cofactor. In Bacillus cereus (strain ZK / E33L), this protein is Probable molybdenum cofactor guanylyltransferase.